The primary structure comprises 273 residues: Sulfur carrier protein FdhD (273 aa).

Cys124 functions as the Cysteine persulfide intermediate in the catalytic mechanism. 263 to 268 (FCRQSR) lines the Mo-bis(molybdopterin guanine dinucleotide) pocket.

It belongs to the FdhD family.

It localises to the cytoplasm. Required for formate dehydrogenase (FDH) activity. Acts as a sulfur carrier protein that transfers sulfur from IscS to the molybdenum cofactor prior to its insertion into FDH. The polypeptide is Sulfur carrier protein FdhD (Acinetobacter baylyi (strain ATCC 33305 / BD413 / ADP1)).